Reading from the N-terminus, the 179-residue chain is Dynein light chain Tctex-type 5 (179 aa).

This sequence belongs to the dynein light chain Tctex-type family. Interacts with ZMYND10.

This chain is Dynein light chain Tctex-type 5 (DYNLT5), found in Homo sapiens (Human).